Here is a 357-residue protein sequence, read N- to C-terminus: Sorbitol dehydrogenase (357 aa).

Residue Ala2 is modified to N-acetylalanine. A Zn(2+)-binding site is contributed by Cys45. Tyr51 serves as a coordination point for substrate. Residues His70 and Glu71 each coordinate Zn(2+). Glu156 is a binding site for substrate. The NAD(+) site is built by Ile184, Asp204, and Arg209. Phosphoserine occurs at positions 211 and 225. NAD(+) contacts are provided by residues 273–275 and 297–299; these read VGL and VFR. Substrate is bound by residues Arg299 and Tyr300.

The protein belongs to the zinc-containing alcohol dehydrogenase family. Homotetramer. Zn(2+) serves as cofactor.

The protein localises to the mitochondrion membrane. It is found in the cell projection. The protein resides in the cilium. Its subcellular location is the flagellum. The catalysed reaction is xylitol + NAD(+) = D-xylulose + NADH + H(+). It carries out the reaction L-iditol + NAD(+) = keto-L-sorbose + NADH + H(+). The enzyme catalyses keto-D-fructose + NADH + H(+) = D-sorbitol + NAD(+). Polyol dehydrogenase that catalyzes the reversible NAD(+)-dependent oxidation of various sugar alcohols. Is active with xylitol, L-iditol and D-sorbitol (D-glucitol) as substrates, leading to the C2-oxidized products D-xylulose, L-sorbose and D-fructose, respectively. Is a key enzyme in the polyol pathway that interconverts glucose and fructose via sorbitol, which constitutes an important alternate route for glucose metabolism. May play a role in sperm motility by using sorbitol as an alternative energy source for sperm motility. The sequence is that of Sorbitol dehydrogenase (SORD) from Macaca fascicularis (Crab-eating macaque).